Here is a 331-residue protein sequence, read N- to C-terminus: GTP 3',8-cyclase (331 aa).

A Radical SAM core domain is found at 9 to 233 (PFGRRITYLR…VRSSKVTGGP (225 aa)). Arg18 lines the GTP pocket. The [4Fe-4S] cluster site is built by Cys25 and Cys29. Tyr31 contributes to the S-adenosyl-L-methionine binding site. Residue Cys32 participates in [4Fe-4S] cluster binding. A GTP-binding site is contributed by Arg67. Residue Gly71 coordinates S-adenosyl-L-methionine. Thr98 serves as a coordination point for GTP. Ser122 is a binding site for S-adenosyl-L-methionine. Residue Lys159 participates in GTP binding. Met193 provides a ligand contact to S-adenosyl-L-methionine. [4Fe-4S] cluster contacts are provided by Cys257 and Cys260. 262–264 (RVR) provides a ligand contact to GTP. Residue Cys274 participates in [4Fe-4S] cluster binding.

This sequence belongs to the radical SAM superfamily. MoaA family. As to quaternary structure, monomer and homodimer. [4Fe-4S] cluster serves as cofactor.

It carries out the reaction GTP + AH2 + S-adenosyl-L-methionine = (8S)-3',8-cyclo-7,8-dihydroguanosine 5'-triphosphate + 5'-deoxyadenosine + L-methionine + A + H(+). Its pathway is cofactor biosynthesis; molybdopterin biosynthesis. Functionally, catalyzes the cyclization of GTP to (8S)-3',8-cyclo-7,8-dihydroguanosine 5'-triphosphate. In Ectopseudomonas mendocina (strain ymp) (Pseudomonas mendocina), this protein is GTP 3',8-cyclase.